Consider the following 206-residue polypeptide: Phosphatidyl-N-methylethanolamine N-methyltransferase (206 aa).

At 1–20 (MKESVQEIIQQLIHSVDLQS) the chain is on the lumenal side. The segment at residues 21–41 (SKFQLAIVCTMFNPIFWNIVA) is an intramembrane region (helical). Over 42–53 (RMEYHKHSLTKM) the chain is Lumenal. A helical transmembrane segment spans residues 54-74 (CGGARKGCYMLAATIFSLGIV). Residues 75–101 (RDMVYESALREQPTCSLITGENWTKLG) are Cytoplasmic-facing. The chain crosses the membrane as a helical span at residues 102–122 (VALFGLGQVLVLSSMYKLGIT). Position 106–108 (106–108 (GLG)) interacts with S-adenosyl-L-methionine. Topologically, residues 123–165 (GTYLGDYFGILMDERVTGFPFNVSNNPMYQGSTLSFLGIALYK) are lumenal. A helical membrane pass occupies residues 166-186 (GKPAGLVVSAVVYFMYKIALR). Over 187–206 (WEEPFTAMIYANRDKAKKNM) the chain is Cytoplasmic. Residue 188-189 (EE) coordinates S-adenosyl-L-methionine.

Belongs to the class VI-like SAM-binding methyltransferase superfamily. PEMT/PEM2 methyltransferase family.

The protein localises to the endoplasmic reticulum membrane. It is found in the mitochondrion membrane. The enzyme catalyses a 1,2-diacyl-sn-glycero-3-phosphoethanolamine + S-adenosyl-L-methionine = a 1,2-diacyl-sn-glycero-3-phospho-N-methylethanolamine + S-adenosyl-L-homocysteine + H(+). It catalyses the reaction a 1,2-diacyl-sn-glycero-3-phospho-N-methylethanolamine + S-adenosyl-L-methionine = a 1,2-diacyl-sn-glycero-3-phospho-N,N-dimethylethanolamine + S-adenosyl-L-homocysteine + H(+). The catalysed reaction is a 1,2-diacyl-sn-glycero-3-phospho-N,N-dimethylethanolamine + S-adenosyl-L-methionine = a 1,2-diacyl-sn-glycero-3-phosphocholine + S-adenosyl-L-homocysteine + H(+). It functions in the pathway phospholipid metabolism; phosphatidylcholine biosynthesis. Catalyzes the second two steps of the methylation pathway of phosphatidylcholine biosynthesis, the SAM-dependent methylation of phosphatidylmonomethylethanolamine (PMME) to phosphatidyldimethylethanolamine (PDME) and of PDME to phosphatidylcholine (PC). Can also catalyze the first methylation reaction of PE to PMME in the absence of PE methyltransferase CHO2. The chain is Phosphatidyl-N-methylethanolamine N-methyltransferase from Saccharomyces cerevisiae (strain ATCC 204508 / S288c) (Baker's yeast).